We begin with the raw amino-acid sequence, 490 residues long: C-type lectin domain family 14 member A (490 aa).

Residues 1 to 21 (MRPAFALCLLWQALWPGPGGG) form the signal peptide. At 22–397 (EHPTADRAGC…TPQAFDSSSA (376 aa)) the chain is on the extracellular side. One can recognise a C-type lectin domain in the interval 33 to 173 (ASGACYSLHH…LRANGYLCKY (141 aa)). Cysteine 143 and cysteine 162 are joined by a disulfide. Residue asparagine 189 is glycosylated (N-linked (GlcNAc...) asparagine). Residues 245–287 (PCPGRYLRAGKCAELPNCLDDLGGFACECATGFELGKDGRSCV) enclose the EGF-like domain. Residues 286–349 (CVTSGEGQPT…VTSIPEIPRW (64 aa)) form a disordered region. Over residues 301–315 (VPTRRPPATATSPVP) the composition is skewed to low complexity. An N-linked (GlcNAc...) asparagine glycan is attached at asparagine 381. The chain crosses the membrane as a helical span at residues 398-418 (VVFIFVSTAVVVLVILTMTVL). The Cytoplasmic segment spans residues 419-490 (GLVKLCFHES…AESPLGSSDA (72 aa)). The interval 428 to 461 (SPSSQPRKESMGPPGLESDPEPAALGSSSAHCTN) is disordered.

Its subcellular location is the membrane. The polypeptide is C-type lectin domain family 14 member A (CLEC14A) (Homo sapiens (Human)).